The sequence spans 226 residues: MKKITIAIDGFSSTGKSTLAKQLANHLGYIFVDSGAMYRAITYYALQNEYINQDLFNKEKLIKNLPQIKLEFQFNPKLGFAEMYLNDANVEKEIRTIKVSNYVSQVAAISQVRAKLVEQQQQMGKNKGIVMDGRDIGTVVFPTAELKIFMTASAQTRAQRRYDEMSSNSENVSYDEVLKNVQERDFIDTHREDSPLVKANDAIEIDNSHLSREEQFKIVLDLVNNI.

10–18 (GFSSTGKST) is an ATP binding site.

It belongs to the cytidylate kinase family. Type 1 subfamily.

The protein resides in the cytoplasm. The catalysed reaction is CMP + ATP = CDP + ADP. It catalyses the reaction dCMP + ATP = dCDP + ADP. The sequence is that of Cytidylate kinase from Flavobacterium psychrophilum (strain ATCC 49511 / DSM 21280 / CIP 103535 / JIP02/86).